Reading from the N-terminus, the 399-residue chain is Acetate kinase 2 (399 aa).

Asn10 is a Mg(2+) binding site. An ATP-binding site is contributed by Lys17. Arg89 contributes to the substrate binding site. Asp146 functions as the Proton donor/acceptor in the catalytic mechanism. ATP contacts are provided by residues 206 to 210, 281 to 283, and 329 to 333; these read HLGNG, DCR, and GIGEN. Glu384 contacts Mg(2+).

Belongs to the acetokinase family. As to quaternary structure, homodimer. The cofactor is Mg(2+). Requires Mn(2+) as cofactor.

It is found in the cytoplasm. It catalyses the reaction acetate + ATP = acetyl phosphate + ADP. Its pathway is metabolic intermediate biosynthesis; acetyl-CoA biosynthesis; acetyl-CoA from acetate: step 1/2. Catalyzes the formation of acetyl phosphate from acetate and ATP. Can also catalyze the reverse reaction. This is Acetate kinase 2 from Neisseria meningitidis serogroup A / serotype 4A (strain DSM 15465 / Z2491).